The primary structure comprises 227 residues: Cytochrome c oxidase subunit 2 (227 aa).

Residues 1-14 lie on the Mitochondrial intermembrane side of the membrane; sequence MAYPFELGFQDATS. The helical transmembrane segment at 15–45 threads the bilayer; sequence PIMEELLHFHDHTLMIVFLISSLVLYIISLM. Residues 46 to 59 are Mitochondrial matrix-facing; that stretch reads LTTKLTHTSTMDAQ. A helical transmembrane segment spans residues 60–87; that stretch reads EVETIWTILPAIILILIALPSLRILYMM. Residues 88-227 are Mitochondrial intermembrane-facing; that stretch reads DEINDPSLTV…HFENWSSSML (140 aa). Cu cation contacts are provided by histidine 161, cysteine 196, glutamate 198, cysteine 200, histidine 204, and methionine 207. Glutamate 198 contacts Mg(2+).

The protein belongs to the cytochrome c oxidase subunit 2 family. As to quaternary structure, component of the cytochrome c oxidase (complex IV, CIV), a multisubunit enzyme composed of 14 subunits. The complex is composed of a catalytic core of 3 subunits MT-CO1, MT-CO2 and MT-CO3, encoded in the mitochondrial DNA, and 11 supernumerary subunits COX4I, COX5A, COX5B, COX6A, COX6B, COX6C, COX7A, COX7B, COX7C, COX8 and NDUFA4, which are encoded in the nuclear genome. The complex exists as a monomer or a dimer and forms supercomplexes (SCs) in the inner mitochondrial membrane with NADH-ubiquinone oxidoreductase (complex I, CI) and ubiquinol-cytochrome c oxidoreductase (cytochrome b-c1 complex, complex III, CIII), resulting in different assemblies (supercomplex SCI(1)III(2)IV(1) and megacomplex MCI(2)III(2)IV(2)). Found in a complex with TMEM177, COA6, COX18, COX20, SCO1 and SCO2. Interacts with TMEM177 in a COX20-dependent manner. Interacts with COX20. Interacts with COX16. Requires Cu cation as cofactor.

It is found in the mitochondrion inner membrane. The enzyme catalyses 4 Fe(II)-[cytochrome c] + O2 + 8 H(+)(in) = 4 Fe(III)-[cytochrome c] + 2 H2O + 4 H(+)(out). Functionally, component of the cytochrome c oxidase, the last enzyme in the mitochondrial electron transport chain which drives oxidative phosphorylation. The respiratory chain contains 3 multisubunit complexes succinate dehydrogenase (complex II, CII), ubiquinol-cytochrome c oxidoreductase (cytochrome b-c1 complex, complex III, CIII) and cytochrome c oxidase (complex IV, CIV), that cooperate to transfer electrons derived from NADH and succinate to molecular oxygen, creating an electrochemical gradient over the inner membrane that drives transmembrane transport and the ATP synthase. Cytochrome c oxidase is the component of the respiratory chain that catalyzes the reduction of oxygen to water. Electrons originating from reduced cytochrome c in the intermembrane space (IMS) are transferred via the dinuclear copper A center (CU(A)) of subunit 2 and heme A of subunit 1 to the active site in subunit 1, a binuclear center (BNC) formed by heme A3 and copper B (CU(B)). The BNC reduces molecular oxygen to 2 water molecules using 4 electrons from cytochrome c in the IMS and 4 protons from the mitochondrial matrix. The sequence is that of Cytochrome c oxidase subunit 2 (MT-CO2) from Tamias amoenus (Yellow-pine chipmunk).